A 345-amino-acid polypeptide reads, in one-letter code: Mitochondrial metalloendopeptidase OMA1 (345 aa).

The Mitochondrial matrix portion of the chain corresponds to 1 to 67 (MLRNIIRFKG…ILLDKSSRKY (67 aa)). The chain crosses the membrane as a helical span at residues 68-88 (LALLFGGCSLFYYTHLDKAPV). Over 89-345 (SDRSRFIWVS…GNYYKSFFSM (257 aa)) the chain is Mitochondrial intermembrane. H203 contributes to the Zn(2+) binding site. Residue E204 is part of the active site. Zn(2+) contacts are provided by H207 and E257. Residues C272 and C332 are joined by a disulfide bond. Residues 314 to 345 (ENMSKWLPKANEIYEQSDCSSMGNYYKSFFSM) form a required for protease activation region.

Belongs to the peptidase M48 family. In terms of assembly, homooligomer. The cofactor is Zn(2+). Forms a redox-dependent disulfide bond, which plays a structural role and regulates its conformational stability and activity.

Its subcellular location is the mitochondrion inner membrane. Protease activity is induced in response to various mitochondrial stress, such as changes in membrane potential, oxidative stress or chronic hyperpolarization, and depends on its C-terminal region. Functionally, protease that is part of the quality control system in the inner membrane of mitochondria. Activated in response to various mitochondrial stress, leading to the proteolytic cleavage of target proteins, such as OXA1 and COX1. Cleaves and thereby promotes the turnover of mistranslated or misfolded membrane proteins. Cleaves the misfolded multi-pass membrane protein OXA1. Involved in quality control of cytochrome oxidase assembly: mediates the cleavage of COX1 in cells lacking COA2. Required for the stability of the respiratory supercomplexes. Required for TOR signaling. The chain is Mitochondrial metalloendopeptidase OMA1 from Saccharomyces cerevisiae (strain ATCC 204508 / S288c) (Baker's yeast).